The primary structure comprises 833 residues: Ventricular zone-expressed PH domain-containing protein 1 (833 aa).

Interaction with TGFBR1 regions lie at residues 201 to 319 and 663 to 833; these read AELL…LANM and ESTF…TTYL. One can recognise a PH domain in the interval 716-819; that stretch reads QPLIEGKLKE…WLQCINVALA (104 aa).

This sequence belongs to the MELT/VEPH family. As to quaternary structure, interacts with TGFBR1. In terms of tissue distribution, specifically expressed in kidney and eye. In the eye, expressed in retinal pigmented epithelium but not in the neural retina.

Its subcellular location is the cell membrane. In terms of biological role, interacts with TGF-beta receptor type-1 (TGFBR1) and inhibits dissociation of activated SMAD2 from TGFBR1, impeding its nuclear accumulation and resulting in impaired TGF-beta signaling. May also affect FOXO, Hippo and Wnt signaling. This is Ventricular zone-expressed PH domain-containing protein 1 (Veph1) from Mus musculus (Mouse).